The sequence spans 216 residues: 3-isopropylmalate dehydratase small subunit (216 aa).

This sequence belongs to the LeuD family. LeuD type 1 subfamily. Heterodimer of LeuC and LeuD.

The catalysed reaction is (2R,3S)-3-isopropylmalate = (2S)-2-isopropylmalate. The protein operates within amino-acid biosynthesis; L-leucine biosynthesis; L-leucine from 3-methyl-2-oxobutanoate: step 2/4. Its function is as follows. Catalyzes the isomerization between 2-isopropylmalate and 3-isopropylmalate, via the formation of 2-isopropylmaleate. The sequence is that of 3-isopropylmalate dehydratase small subunit from Cupriavidus pinatubonensis (strain JMP 134 / LMG 1197) (Cupriavidus necator (strain JMP 134)).